The chain runs to 206 residues: Probable GTP-binding protein EngB (206 aa).

Positions 23–197 (QGIEVAFAGR…ERVLDKWFGY (175 aa)) constitute an EngB-type G domain. Residues 31-38 (GRSNAGKS), 58-62 (GRTQL), 76-79 (DLPG), 143-146 (TKAD), and 176-178 (FSS) contribute to the GTP site. The Mg(2+) site is built by serine 38 and threonine 60.

The protein belongs to the TRAFAC class TrmE-Era-EngA-EngB-Septin-like GTPase superfamily. EngB GTPase family. It depends on Mg(2+) as a cofactor.

Its function is as follows. Necessary for normal cell division and for the maintenance of normal septation. This chain is Probable GTP-binding protein EngB, found in Pseudoalteromonas atlantica (strain T6c / ATCC BAA-1087).